A 230-amino-acid chain; its full sequence is Ureidoacrylate amidohydrolase RutB (230 aa).

Residue Asp-24 is the Proton acceptor of the active site. Lys-133 is a catalytic residue. The active-site Nucleophile is the Cys-166.

It belongs to the isochorismatase family. RutB subfamily.

It carries out the reaction (Z)-3-ureidoacrylate + H2O + H(+) = (Z)-3-aminoacrylate + NH4(+) + CO2. It catalyses the reaction (Z)-3-ureidoacrylate + H2O = (Z)-3-aminoacrylate + carbamate + H(+). The catalysed reaction is (Z)-2-methylureidoacrylate + H2O + H(+) = (Z)-2-methylaminoacrylate + NH4(+) + CO2. Hydrolyzes ureidoacrylate to form aminoacrylate and carbamate. The carbamate hydrolyzes spontaneously, thereby releasing one of the nitrogen atoms of the pyrimidine ring as ammonia and one of its carbon atoms as CO2. The polypeptide is Ureidoacrylate amidohydrolase RutB (Enterobacter sp. (strain 638)).